Consider the following 308-residue polypeptide: D-alanine--D-alanine ligase (308 aa).

Positions 108–303 (KLVWKAAGLP…YEALCLKVLE (196 aa)) constitute an ATP-grasp domain. 134–189 (EAELGLPMFVKPACEGSSLGVTKVRKAGELAQAYAEARKFDPLVLAEQFVGGGEYT) provides a ligand contact to ATP. Mg(2+)-binding residues include aspartate 257, glutamate 270, and asparagine 272.

Belongs to the D-alanine--D-alanine ligase family. It depends on Mg(2+) as a cofactor. Mn(2+) serves as cofactor.

The protein resides in the cytoplasm. The catalysed reaction is 2 D-alanine + ATP = D-alanyl-D-alanine + ADP + phosphate + H(+). Its pathway is cell wall biogenesis; peptidoglycan biosynthesis. Its function is as follows. Cell wall formation. The protein is D-alanine--D-alanine ligase of Laribacter hongkongensis (strain HLHK9).